We begin with the raw amino-acid sequence, 202 residues long: FMN-dependent NADH:quinone oxidoreductase (202 aa).

Residues S10 and 95–98 (MYNF) contribute to the FMN site.

Belongs to the azoreductase type 1 family. In terms of assembly, homodimer. FMN is required as a cofactor.

It carries out the reaction 2 a quinone + NADH + H(+) = 2 a 1,4-benzosemiquinone + NAD(+). The catalysed reaction is N,N-dimethyl-1,4-phenylenediamine + anthranilate + 2 NAD(+) = 2-(4-dimethylaminophenyl)diazenylbenzoate + 2 NADH + 2 H(+). Its function is as follows. Quinone reductase that provides resistance to thiol-specific stress caused by electrophilic quinones. Functionally, also exhibits azoreductase activity. Catalyzes the reductive cleavage of the azo bond in aromatic azo compounds to the corresponding amines. In Alkalilimnicola ehrlichii (strain ATCC BAA-1101 / DSM 17681 / MLHE-1), this protein is FMN-dependent NADH:quinone oxidoreductase.